The following is a 78-amino-acid chain: RNA-binding protein KhpA (78 aa).

The region spanning 29-78 is the KH domain; it reads TIIYELTVAKGDIGKIIGKEGRTIKAIRTLLVSVASRDNVKVSLEIMEER.

The protein belongs to the KhpA RNA-binding protein family.

The protein resides in the cytoplasm. Functionally, a probable RNA-binding protein. This chain is RNA-binding protein KhpA, found in Chlamydia muridarum (strain MoPn / Nigg).